Consider the following 153-residue polypeptide: Cell division protein SepF (153 aa).

The protein belongs to the SepF family. In terms of assembly, homodimer. Interacts with FtsZ.

The protein resides in the cytoplasm. Cell division protein that is part of the divisome complex and is recruited early to the Z-ring. Probably stimulates Z-ring formation, perhaps through the cross-linking of FtsZ protofilaments. Its function overlaps with FtsA. This is Cell division protein SepF from Clostridium novyi (strain NT).